The chain runs to 308 residues: Acetaldehyde dehydrogenase 2 (308 aa).

12–15 (SGNI) is a binding site for NAD(+). The active-site Acyl-thioester intermediate is the C127. NAD(+) contacts are provided by residues 162–170 (SAGPGTRAN) and N281.

This sequence belongs to the acetaldehyde dehydrogenase family.

It carries out the reaction acetaldehyde + NAD(+) + CoA = acetyl-CoA + NADH + H(+). The polypeptide is Acetaldehyde dehydrogenase 2 (Mycobacterium marinum (strain ATCC BAA-535 / M)).